A 100-amino-acid chain; its full sequence is Cell division protein FtsB (100 aa).

The Cytoplasmic segment spans residues 1 to 3; it reads MKQ. A helical transmembrane segment spans residues 4–21; sequence LIFLLICLLSLLQYRLWL. At 22 to 100 the chain is on the periplasmic side; it reads GDNNLSEYVL…ELRERNPFNR (79 aa). Positions 49–73 form a coiled coil; that stretch reads RNQILKEEIIDLKRGTEAIEERARN.

Belongs to the FtsB family. Part of a complex composed of FtsB, FtsL and FtsQ.

The protein resides in the cell inner membrane. In terms of biological role, essential cell division protein. May link together the upstream cell division proteins, which are predominantly cytoplasmic, with the downstream cell division proteins, which are predominantly periplasmic. In Shewanella frigidimarina (strain NCIMB 400), this protein is Cell division protein FtsB.